The sequence spans 199 residues: DnaJ homolog subfamily C member 5B (199 aa).

Phosphoserine is present on residues S14 and S16. A J domain is found at 19 to 84 (ALYEILGLHK…SKRNIYDKYG (66 aa)).

Interacts with the chaperone complex consisting of HSC70 and SGTA. In terms of processing, palmitoylated.

It localises to the membrane. This chain is DnaJ homolog subfamily C member 5B (DNAJC5B), found in Bos taurus (Bovine).